A 609-amino-acid polypeptide reads, in one-letter code: COP9 signalosome complex subunit 5 (609 aa).

Residues 75-215 (CYISSLALMK…IGAFRTYPEG (141 aa)) enclose the MPN domain. Zn(2+) contacts are provided by His-161, His-163, and Asp-174. The JAMM motif signature appears at 161–174 (HSHPGYGCWLSGID). 2 disordered regions span residues 210-248 (RTYP…LPKS) and 381-456 (TTTK…EVDS). Residues 214–224 (EGSQQQPSMTN) are compositionally biased toward polar residues. 3 stretches are compositionally biased toward acidic residues: residues 392–404 (TDID…DESD), 420–431 (SDDDDEEEEGEG), and 445–456 (EVEEGPTDEVDS).

Belongs to the peptidase M67A family. CSN5 subfamily. In terms of assembly, component of the COP9 signalosome (CSN) complex.

Its subcellular location is the cytoplasm. The protein resides in the nucleus. In terms of biological role, catalytic Component of the COP9 signalosome (CSN) complex that acts as an regulator of the ubiquitin (Ubl) conjugation pathway by mediating the deneddylation of the cullin subunit of SCF-type E3 ubiquitin-protein ligase complexes. The chain is COP9 signalosome complex subunit 5 (JAB1) from Candida albicans (strain SC5314 / ATCC MYA-2876) (Yeast).